The primary structure comprises 643 residues: 1-deoxy-D-xylulose-5-phosphate synthase (643 aa).

Thiamine diphosphate-binding positions include histidine 72 and 113-115 (GHA). Aspartate 144 contributes to the Mg(2+) binding site. Residues 145-146 (GA), asparagine 174, tyrosine 287, and glutamate 370 contribute to the thiamine diphosphate site. Asparagine 174 provides a ligand contact to Mg(2+).

This sequence belongs to the transketolase family. DXPS subfamily. In terms of assembly, homodimer. Mg(2+) is required as a cofactor. It depends on thiamine diphosphate as a cofactor.

It carries out the reaction D-glyceraldehyde 3-phosphate + pyruvate + H(+) = 1-deoxy-D-xylulose 5-phosphate + CO2. Its pathway is metabolic intermediate biosynthesis; 1-deoxy-D-xylulose 5-phosphate biosynthesis; 1-deoxy-D-xylulose 5-phosphate from D-glyceraldehyde 3-phosphate and pyruvate: step 1/1. In terms of biological role, catalyzes the acyloin condensation reaction between C atoms 2 and 3 of pyruvate and glyceraldehyde 3-phosphate to yield 1-deoxy-D-xylulose-5-phosphate (DXP). This chain is 1-deoxy-D-xylulose-5-phosphate synthase, found in Prochlorococcus marinus (strain SARG / CCMP1375 / SS120).